Reading from the N-terminus, the 163-residue chain is Cyanate hydratase (163 aa).

Catalysis depends on residues R103, E106, and S129.

Belongs to the cyanase family.

It catalyses the reaction cyanate + hydrogencarbonate + 3 H(+) = NH4(+) + 2 CO2. Its function is as follows. Catalyzes the reaction of cyanate with bicarbonate to produce ammonia and carbon dioxide. In Paracoccidioides lutzii (strain ATCC MYA-826 / Pb01) (Paracoccidioides brasiliensis), this protein is Cyanate hydratase.